The following is a 419-amino-acid chain: Divergent protein kinase domain 1C (419 aa).

At 1–22 (MARAAGARGPAGWCRRRGRCGR) the chain is on the cytoplasmic side. Residues 16–17 (RR) carry the May mediate ER retention motif. Residues 23-43 (GTLLAFAAWTAGWVLAAALLL) form a helical membrane-spanning segment. The Lumenal portion of the chain corresponds to 44-419 (RAHPGVLSER…TLRELQEAEK (376 aa)).

Belongs to the DIPK family. Among the many cysteines in the lumenal domain, most are probably involved in disulfide bonds.

The protein resides in the endoplasmic reticulum membrane. This chain is Divergent protein kinase domain 1C, found in Homo sapiens (Human).